A 276-amino-acid polypeptide reads, in one-letter code: Large ribosomal subunit protein uL2 (276 aa).

The tract at residues 221–276 (RGSVMNPNDHPHGGGEGRAPIGRKAPVTPWGKPTLGLKTRKKKNKSDQYIIRRRKK) is disordered.

This sequence belongs to the universal ribosomal protein uL2 family. As to quaternary structure, part of the 50S ribosomal subunit. Forms a bridge to the 30S subunit in the 70S ribosome.

Its function is as follows. One of the primary rRNA binding proteins. Required for association of the 30S and 50S subunits to form the 70S ribosome, for tRNA binding and peptide bond formation. It has been suggested to have peptidyltransferase activity; this is somewhat controversial. Makes several contacts with the 16S rRNA in the 70S ribosome. The polypeptide is Large ribosomal subunit protein uL2 (Brevibacillus brevis (strain 47 / JCM 6285 / NBRC 100599)).